The following is a 445-amino-acid chain: Histamine H3 receptor (445 aa).

At 1 to 39 the chain is on the extracellular side; it reads MERAPPDGPLNASGALAGEAAAAGGARGFSAAWTAVLAA. Asn-11 carries an N-linked (GlcNAc...) asparagine glycan. A helical transmembrane segment spans residues 40-60; it reads LMALLIVATVLGNALVMLAFV. Topologically, residues 61-70 are cytoplasmic; it reads ADSSLRTQNN. A helical transmembrane segment spans residues 71 to 91; it reads FFLLNLAISDFLVGAFCIPLY. Residues 92–108 are Extracellular-facing; it reads VPYVLTGRWTFGRGLCK. A disulfide bridge connects residues Cys-107 and Cys-188. The chain crosses the membrane as a helical span at residues 109-129; it reads LWLVVDYLLCTSSAFNIVLIS. Topologically, residues 130–156 are cytoplasmic; it reads YDRFLSVTRAVSYRAQQGDTRRAVRKM. A helical membrane pass occupies residues 157 to 177; that stretch reads LLVWVLAFLLYGPAILSWEYL. The Extracellular portion of the chain corresponds to 178 to 196; it reads SGGSSIPEGHCYAEFFYNW. A helical membrane pass occupies residues 197-217; the sequence is YFLITASTLEFFTPFLSVTFF. At 218 to 359 the chain is on the cytoplasmic side; sequence NLSIYLNIQR…LSRDRKVAKS (142 aa). Disordered stretches follow at residues 237–260 and 288–336; these read REAAGPEPPPEAQPSPPPPPGCWG and EATL…LEKR. Positions 242 to 257 are enriched in pro residues; sequence PEPPPEAQPSPPPPPG. Residues 290–299 are compositionally biased toward gly residues; it reads TLGGGGGGGS. The segment covering 300–312 has biased composition (low complexity); sequence VASPTSSSGSSSR. A helical membrane pass occupies residues 360 to 380; that stretch reads LAVIVSIFGLCWAPYTLLMII. Residues 381-395 lie on the Extracellular side of the membrane; it reads RAACHGHCVPDYWYE. A helical transmembrane segment spans residues 396–416; it reads TSFWLLWANSAVNPVLYPLCH. At 417–445 the chain is on the cytoplasmic side; that stretch reads HSFRRAFTKLLCPQKLKIQPHSSLEHCWK. Residue Ser-439 is modified to Phosphoserine.

It belongs to the G-protein coupled receptor 1 family. Expressed predominantly in the CNS, with the greatest expression in the thalamus and caudate nucleus. The various isoforms are mainly coexpressed in brain, but their relative expression level varies in a region-specific manner. Isoform 3 and isoform 7 are highly expressed in the thalamus, caudate nucleus and cerebellum while isoform 5 and isoform 6 show a poor expression. Isoform 5 and isoform 6 show a high expression in the amygdala, substantia nigra, cerebral cortex and hypothalamus. Isoform 7 is not found in hypothalamus or substantia nigra.

It localises to the cell membrane. In terms of biological role, the H3 subclass of histamine receptors could mediate the histamine signals in CNS and peripheral nervous system. Signals through the inhibition of adenylate cyclase and displays high constitutive activity (spontaneous activity in the absence of agonist). Agonist stimulation of isoform 3 neither modified adenylate cyclase activity nor induced intracellular calcium mobilization. The chain is Histamine H3 receptor (HRH3) from Homo sapiens (Human).